The primary structure comprises 264 residues: MIVVKIGGRVVKNSLDKVILDIANINDKVILVHGGGDIVTDYTKRLGIEPVFVTSPEGIRSRYTTKEELEVYIMAMSLINKMITSKLCSLGKNAIGITGADGGLLLAERKKRIIVIDERGKKRIIEGGYTGKVKEVRSEVINHLMKLFDIIVVSPLALDVEESTPLNIDGDQAAFAISKAVKVNVLVILSDVEGVLVEGKVVDRLTPEEAKELSKKIGPGMNRKLLMAAESVENGVNKVIIGSGVKDRPVSSALELNGTVIVNG.

Residues 35–36 (GG), Arg-62, and Asn-167 each bind substrate.

The protein belongs to the acetylglutamate kinase family. LysZ subfamily.

The protein resides in the cytoplasm. The enzyme catalyses [amino-group carrier protein]-C-terminal-N-(1,4-dicarboxybutan-1-yl)-L-glutamine + ATP = [amino-group carrier protein]-C-terminal-N-(1-carboxy-5-phosphooxy-5-oxopentan-1-yl)-L-glutamine + ADP. It catalyses the reaction [amino-group carrier protein]-C-terminal-gamma-(L-glutamyl)-L-glutamate + ATP = [amino-group carrier protein]-C-terminal-gamma-(5-phospho-L-glutamyl)-L-glutamate + ADP. The protein operates within amino-acid biosynthesis; L-lysine biosynthesis via AAA pathway; L-lysine from L-alpha-aminoadipate (Thermus route): step 2/5. It functions in the pathway amino-acid biosynthesis; L-arginine biosynthesis. Its function is as follows. Involved in both the arginine and lysine biosynthetic pathways. Phosphorylates the LysW-bound precursors glutamate (for arginine biosynthesis), respectively alpha-aminoadipate (for lysine biosynthesis). This is [LysW]-aminoadipate/[LysW]-glutamate kinase from Saccharolobus islandicus (strain Y.N.15.51 / Yellowstone #2) (Sulfolobus islandicus).